The sequence spans 343 residues: Protease inhibitor Egf1.5a (343 aa).

Residues methionine 1–alanine 28 form the signal peptide. The region spanning cysteine 52–cysteine 104 is the TIL domain.

It belongs to the polydnaviridae EGF-like motif protein family. As to quaternary structure, interacts with host PAP1, PAP3 and SPH2.

Its function is as follows. Counteracts the host humoral immune response by inhibiting the processing and the amidolytic activity of host PAP1 and PAP3. Thereby, melanization of host hemolymph, normally producing several reactive intermediates toxic for viruses, is deregulated and proper immune response cannot occur. This is Protease inhibitor Egf1.5a (O1) from Microplitis demolitor bracovirus (isolate Webb) (MdBV).